A 1265-amino-acid chain; its full sequence is Methionine synthase (1265 aa).

Positions Arg-19–Val-338 constitute a Hcy-binding domain. Zn(2+) contacts are provided by Cys-260, Cys-323, and Cys-324. One can recognise a Pterin-binding domain in the interval Phe-371–Glu-632. Residues Gly-382–Arg-384, Asp-449, Asn-470, Asp-537, Asn-579, Arg-585, and Arg-591 each bind (6S)-5,6,7,8-tetrahydrofolate. In terms of domain architecture, B12-binding N-terminal spans Gln-662 to Arg-759. Residues Glu-709, Gly-782–Asp-786, His-785, Ser-830, Thr-834, and Ala-886 contribute to the methylcob(III)alamin site. The B12-binding domain occupies Gln-772 to Glu-907. In terms of domain architecture, AdoMet activation spans Ser-923 to Asp-1265. S-adenosyl-L-methionine is bound by residues Asp-974, Arg-1172, and Tyr-1227–Phe-1228. Phosphothreonine is present on Thr-1264.

It belongs to the vitamin-B12 dependent methionine synthase family. Monomer. Dimer. Forms a multiprotein complex with MMACHC, MMADHC and MTRR. Methylcob(III)alamin is required as a cofactor. Zn(2+) serves as cofactor. In terms of tissue distribution, widely expressed. Expressed at the highest levels in pancreas, heart, brain, skeletal muscle and placenta. Expressed at lower levels in lung, liver and kidney.

It is found in the cytoplasm. The catalysed reaction is (6S)-5-methyl-5,6,7,8-tetrahydrofolate + L-homocysteine = (6S)-5,6,7,8-tetrahydrofolate + L-methionine. Its pathway is amino-acid biosynthesis; L-methionine biosynthesis via de novo pathway; L-methionine from L-homocysteine (MetH route): step 1/1. Catalyzes the transfer of a methyl group from methylcob(III)alamin (MeCbl) to homocysteine, yielding enzyme-bound cob(I)alamin and methionine in the cytosol. MeCbl is an active form of cobalamin (vitamin B12) used as a cofactor for methionine biosynthesis. Cob(I)alamin form is regenerated to MeCbl by a transfer of a methyl group from 5-methyltetrahydrofolate. The processing of cobalamin in the cytosol occurs in a multiprotein complex composed of at least MMACHC, MMADHC, MTRR (methionine synthase reductase) and MTR which may contribute to shuttle safely and efficiently cobalamin towards MTR in order to produce methionine. The protein is Methionine synthase of Homo sapiens (Human).